A 393-amino-acid chain; its full sequence is Glycocyamine kinase (393 aa).

One can recognise a Phosphagen kinase N-terminal domain in the interval 7–94 (REKFAKENFP…FDRVIEEIHH (88 aa)). The region spanning 120–362 (YVKSCRIRCG…NVLIEADKRL (243 aa)) is the Phosphagen kinase C-terminal domain. Residues 123–127 (SCRIR), H186, R231, 287–291 (RASVH), 315–320 (RGTGGE), and D330 each bind ATP. The interval 367-393 (PIDDLTPRLNSSTGTSISATASRHMTL) is disordered. Low complexity predominate over residues 377–393 (SSTGTSISATASRHMTL).

The protein belongs to the ATP:guanido phosphotransferase family. As to quaternary structure, monomer.

It catalyses the reaction guanidinoacetate + ATP = phosphoguanidinoacetate + ADP + H(+). The sequence is that of Glycocyamine kinase from Hediste diversicolor (Sandworm).